Consider the following 246-residue polypeptide: 3'(2'),5'-bisphosphate nucleotidase CysQ (246 aa).

Mg(2+)-binding residues include Glu64, Asp83, Leu85, Asp86, and Asp205. Glu64 is a binding site for substrate. Substrate-binding positions include 85 to 88 (LDGT) and Asp205.

This sequence belongs to the inositol monophosphatase superfamily. CysQ family. The cofactor is Mg(2+).

It localises to the cell inner membrane. The catalysed reaction is adenosine 3',5'-bisphosphate + H2O = AMP + phosphate. Converts adenosine-3',5'-bisphosphate (PAP) to AMP. The chain is 3'(2'),5'-bisphosphate nucleotidase CysQ from Shigella flexneri.